The sequence spans 179 residues: Large ribosomal subunit protein uL10 (179 aa).

It belongs to the universal ribosomal protein uL10 family. As to quaternary structure, part of the ribosomal stalk of the 50S ribosomal subunit. The N-terminus interacts with L11 and the large rRNA to form the base of the stalk. The C-terminus forms an elongated spine to which L12 dimers bind in a sequential fashion forming a multimeric L10(L12)X complex.

In terms of biological role, forms part of the ribosomal stalk, playing a central role in the interaction of the ribosome with GTP-bound translation factors. The sequence is that of Large ribosomal subunit protein uL10 from Mycolicibacterium gilvum (strain PYR-GCK) (Mycobacterium gilvum (strain PYR-GCK)).